Consider the following 141-residue polypeptide: Early nodulin-like protein 19 (141 aa).

The first 26 residues, 1 to 26, serve as a signal peptide directing secretion; it reads MGRSMVLISAVVLAFLVAAPIPEVTA. The region spanning 27-127 is the Phytocyanin domain; that stretch reads KKYLVGDKKF…GMKLDVLVET (101 aa). 2 N-linked (GlcNAc...) asparagine glycosylation sites follow: N42 and N88. A disulfide bridge connects residues C80 and C115.

The protein belongs to the early nodulin-like (ENODL) family.

In terms of biological role, may act as a carbohydrate transporter. The chain is Early nodulin-like protein 19 from Arabidopsis thaliana (Mouse-ear cress).